A 180-amino-acid chain; its full sequence is Dual-action ribosomal maturation protein DarP (180 aa).

It belongs to the DarP family.

It is found in the cytoplasm. In terms of biological role, member of a network of 50S ribosomal subunit biogenesis factors which assembles along the 30S-50S interface, preventing incorrect 23S rRNA structures from forming. Promotes peptidyl transferase center (PTC) maturation. This chain is Dual-action ribosomal maturation protein DarP, found in Chromobacterium violaceum (strain ATCC 12472 / DSM 30191 / JCM 1249 / CCUG 213 / NBRC 12614 / NCIMB 9131 / NCTC 9757 / MK).